Reading from the N-terminus, the 225-residue chain is Small ribosomal subunit protein uS7 (225 aa).

It belongs to the universal ribosomal protein uS7 family. Component of the small ribosomal subunit. Mature ribosomes consist of a small (40S) and a large (60S) subunit. The 40S subunit contains about 32 different proteins and 1 molecule of RNA (18S). The 60S subunit contains 45 different proteins and 3 molecules of RNA (25S, 5.8S and 5S).

The protein localises to the cytoplasm. Component of the ribosome, a large ribonucleoprotein complex responsible for the synthesis of proteins in the cell. The small ribosomal subunit (SSU) binds messenger RNAs (mRNAs) and translates the encoded message by selecting cognate aminoacyl-transfer RNA (tRNA) molecules. The large subunit (LSU) contains the ribosomal catalytic site termed the peptidyl transferase center (PTC), which catalyzes the formation of peptide bonds, thereby polymerizing the amino acids delivered by tRNAs into a polypeptide chain. The nascent polypeptides leave the ribosome through a tunnel in the LSU and interact with protein factors that function in enzymatic processing, targeting, and the membrane insertion of nascent chains at the exit of the ribosomal tunnel. This is Small ribosomal subunit protein uS7 (RPS5) from Candida albicans (strain SC5314 / ATCC MYA-2876) (Yeast).